The following is a 567-amino-acid chain: PCNA-interacting partner (567 aa).

The disordered stretch occupies residues 485-552 (IDLKTAEQVK…GVSRNKASKN (68 aa)). Polar residues-rich tracts occupy residues 512–524 (DIQS…QENE) and 534–552 (LTSS…ASKN).

It belongs to the PARI family.

It localises to the cytoplasm. Its subcellular location is the nucleus. In terms of biological role, required to suppress inappropriate homologous recombination, thereby playing a central role DNA repair and in the maintenance of genomic stability. The sequence is that of PCNA-interacting partner (parpbp) from Xenopus laevis (African clawed frog).